Here is a 620-residue protein sequence, read N- to C-terminus: Chaperone protein DnaK (620 aa).

At Thr-197 the chain carries Phosphothreonine; by autocatalysis. The tract at residues Ala-597–Glu-620 is disordered.

This sequence belongs to the heat shock protein 70 family.

Functionally, acts as a chaperone. The protein is Chaperone protein DnaK of Helicobacter pylori (strain G27).